The primary structure comprises 104 residues: uncharacterized protein (104 aa).

This sequence to A.aeolicus AQ_377.

This is an uncharacterized protein from Archaeoglobus fulgidus (strain ATCC 49558 / DSM 4304 / JCM 9628 / NBRC 100126 / VC-16).